The sequence spans 391 residues: Heme A synthase (391 aa).

8 helical membrane-spanning segments follow: residues 37–57, 121–141, 152–172, 186–206, 229–249, 298–318, 332–352, and 354–374; these read IRLW…VGGL, RQLG…FLAA, LLAL…MVAS, LATH…QALL, TTVL…VAGI, FLHR…WIFG, LLAM…LSAA, and WQVA…ILHA. Histidine 300 contacts heme. Histidine 360 is a binding site for heme.

The protein belongs to the COX15/CtaA family. Type 2 subfamily. Interacts with CtaB. The cofactor is heme b.

It is found in the cell membrane. It carries out the reaction Fe(II)-heme o + 2 A + H2O = Fe(II)-heme a + 2 AH2. It participates in porphyrin-containing compound metabolism; heme A biosynthesis; heme A from heme O: step 1/1. Functionally, catalyzes the conversion of heme O to heme A by two successive hydroxylations of the methyl group at C8. The first hydroxylation forms heme I, the second hydroxylation results in an unstable dihydroxymethyl group, which spontaneously dehydrates, resulting in the formyl group of heme A. The sequence is that of Heme A synthase from Cereibacter sphaeroides (strain KD131 / KCTC 12085) (Rhodobacter sphaeroides).